The primary structure comprises 393 residues: Acetylornithine aminotransferase 1 (393 aa).

R131 serves as a coordination point for N(2)-acetyl-L-ornithine. Pyridoxal 5'-phosphate is bound at residue 215-218; the sequence is DEVQ. The residue at position 244 (K244) is an N6-(pyridoxal phosphate)lysine. T272 contacts N(2)-acetyl-L-ornithine. A pyridoxal 5'-phosphate-binding site is contributed by T273.

It belongs to the class-III pyridoxal-phosphate-dependent aminotransferase family. ArgD subfamily. In terms of assembly, homodimer. The cofactor is pyridoxal 5'-phosphate.

The protein resides in the cytoplasm. The enzyme catalyses N(2)-acetyl-L-ornithine + 2-oxoglutarate = N-acetyl-L-glutamate 5-semialdehyde + L-glutamate. Its pathway is amino-acid biosynthesis; L-arginine biosynthesis; N(2)-acetyl-L-ornithine from L-glutamate: step 4/4. This is Acetylornithine aminotransferase 1 from Bordetella parapertussis (strain 12822 / ATCC BAA-587 / NCTC 13253).